A 172-amino-acid polypeptide reads, in one-letter code: Bifunctional protein PyrR (172 aa).

The PRPP-binding motif lies at 90-102 (LVLVDDVLMSGRT).

Belongs to the purine/pyrimidine phosphoribosyltransferase family. PyrR subfamily.

It carries out the reaction UMP + diphosphate = 5-phospho-alpha-D-ribose 1-diphosphate + uracil. Its function is as follows. Regulates the transcription of the pyrimidine nucleotide (pyr) operon in response to exogenous pyrimidines. Functionally, also displays a weak uracil phosphoribosyltransferase activity which is not physiologically significant. The chain is Bifunctional protein PyrR from Pseudomonas putida (strain GB-1).